A 468-amino-acid chain; its full sequence is TFIIA-alpha and beta-like factor (468 aa).

2 disordered regions span residues 215–236 (DRRL…LSLP) and 379–416 (DSVS…SEQD). A compositionally biased stretch (polar residues) spans 380 to 391 (SVSNEDSTANSS). Positions 401 to 416 (PEEDPLNSGDDVSEQD) are enriched in acidic residues.

This sequence belongs to the TFIIA subunit 1 family. In terms of tissue distribution, testis specific. Expressed in pachytene spermatocytes and haploid spermatids.

The protein resides in the nucleus. Functionally, may function as a testis specific transcription factor. Binds DNA in conjunction with GTF2A2 and TBP (the TATA-binding protein) and together with GTF2A2, allows mRNA transcription. The sequence is that of TFIIA-alpha and beta-like factor (Gtf2a1l) from Mus musculus (Mouse).